The primary structure comprises 31 residues: Cytochrome b6-f complex subunit 6 (31 aa).

The helical transmembrane segment at Leu3 to Leu23 threads the bilayer.

The protein belongs to the PetL family. As to quaternary structure, the 4 large subunits of the cytochrome b6-f complex are cytochrome b6, subunit IV (17 kDa polypeptide, PetD), cytochrome f and the Rieske protein, while the 4 small subunits are PetG, PetL, PetM and PetN. The complex functions as a dimer.

It is found in the plastid. The protein localises to the chloroplast thylakoid membrane. Functionally, component of the cytochrome b6-f complex, which mediates electron transfer between photosystem II (PSII) and photosystem I (PSI), cyclic electron flow around PSI, and state transitions. PetL is important for photoautotrophic growth as well as for electron transfer efficiency and stability of the cytochrome b6-f complex. In Porphyra purpurea (Red seaweed), this protein is Cytochrome b6-f complex subunit 6.